A 671-amino-acid chain; its full sequence is Probable potassium transport system protein Kup (671 aa).

Residues 1-43 (MSQIPSPNDPASTGAAPSSAAVPAGPSATPAPSPTAGFSLPGH) form a disordered region. A compositionally biased stretch (low complexity) spans 10-37 (PASTGAAPSSAAVPAGPSATPAPSPTAG). A run of 12 helical transmembrane segments spans residues 52-72 (LAAL…TSPL), 92-112 (VLGV…FKYM), 147-167 (LMLG…TPAI), 181-201 (PAME…LFLF), 209-229 (VGAV…VLGV), 255-275 (GWHG…GEAL), 291-311 (WLGL…ALLL), 323-343 (LLAP…AAIV), 381-401 (IYLP…VLGF), 407-427 (LASA…LLFH), 441-461 (AWPL…ANVV), and 465-485 (DGGW…STWK).

This sequence belongs to the HAK/KUP transporter (TC 2.A.72) family.

It localises to the cell inner membrane. It carries out the reaction K(+)(in) + H(+)(in) = K(+)(out) + H(+)(out). Transport of potassium into the cell. Likely operates as a K(+):H(+) symporter. The polypeptide is Probable potassium transport system protein Kup (Anaeromyxobacter dehalogenans (strain 2CP-1 / ATCC BAA-258)).